The following is a 211-amino-acid chain: MKRTSAALVVFLILLFLGLLFLPMFIVYGGFGLLDPLATKERYTLSYYIYLESRKPFENVTVLIPAAKLGSLEIVPANFEIVKIGNRTYIKIAREKPYYEIYRLHGENETLTNYRMDITVEFPEIKIENLTEYRIDDGNVSVLLDYTNSSYVSLQVMLYYLELDYVDIFGKRIYTNFGHYNYLWCKTTPVNITEDKRGRWMKVPVSCGGEL.

An N-terminal signal peptide occupies residues 1–27 (MKRTSAALVVFLILLFLGLLFLPMFIV).

This is an uncharacterized protein from Archaeoglobus fulgidus (strain ATCC 49558 / DSM 4304 / JCM 9628 / NBRC 100126 / VC-16).